We begin with the raw amino-acid sequence, 223 residues long: DNA mismatch repair protein MutH (223 aa).

This sequence belongs to the MutH family.

It localises to the cytoplasm. Its function is as follows. Sequence-specific endonuclease that cleaves unmethylated GATC sequences. It is involved in DNA mismatch repair. The polypeptide is DNA mismatch repair protein MutH (Shewanella sp. (strain ANA-3)).